We begin with the raw amino-acid sequence, 209 residues long: Ancillary SecYEG translocon subunit (209 aa).

At methionine 1–lysine 23 the chain is on the cytoplasmic side. Residues tryptophan 24–tyrosine 42 form a helical membrane-spanning segment. The Periplasmic portion of the chain corresponds to glutamine 43 to lysine 209. A TPR repeat occupies proline 161–aspartate 194.

The protein belongs to the YfgM family. Interacts with the SecYEG translocon. Forms a complex with PpiD.

Its subcellular location is the cell inner membrane. Its function is as follows. May mediate protein transfer from the SecYEG translocon to the periplasmic chaperone network via its periplasmic C-terminal region. The sequence is that of Ancillary SecYEG translocon subunit from Neisseria gonorrhoeae (strain ATCC 700825 / FA 1090).